We begin with the raw amino-acid sequence, 423 residues long: Gamma-glutamyl phosphate reductase (423 aa).

The protein belongs to the gamma-glutamyl phosphate reductase family.

The protein resides in the cytoplasm. It carries out the reaction L-glutamate 5-semialdehyde + phosphate + NADP(+) = L-glutamyl 5-phosphate + NADPH + H(+). The protein operates within amino-acid biosynthesis; L-proline biosynthesis; L-glutamate 5-semialdehyde from L-glutamate: step 2/2. Its function is as follows. Catalyzes the NADPH-dependent reduction of L-glutamate 5-phosphate into L-glutamate 5-semialdehyde and phosphate. The product spontaneously undergoes cyclization to form 1-pyrroline-5-carboxylate. The sequence is that of Gamma-glutamyl phosphate reductase from Pseudomonas fluorescens (strain Pf0-1).